Reading from the N-terminus, the 594-residue chain is NADH-ubiquinone oxidoreductase chain 5 (594 aa).

15 helical membrane passes run 1 to 21, 43 to 63, 87 to 107, 114 to 134, 137 to 157, 171 to 191, 211 to 233, 241 to 261, 272 to 292, 301 to 320, 325 to 347, 366 to 386, 409 to 429, 457 to 477, and 486 to 506; these read MNLFSSTTLTMLFVLTLPIMM, AFLISLVPMIAFTNTGQEMII, IVFAPVALFVTWSIMEFSMWY, INQFFKYLLLFLITMMILVTA, LFQLFIGWEGVGIMSFLLIGW, AILYNRIGDVGFIMAMAWFLS, LPLMGLILAATGKSAQFGLHPWL, TPVSALLHSSTMVVAGVFLLI, LMQTITMCLGAITTLFTAMCA, IIAFSTSSQLGLMMVTIGIN, AFLHICTHAFFKAMLFMCSGSII, MPFTTTTLIVGSMALTGVPFL, LLITLVATSLTAVYSTRIIFF, LMAGSIFAGFILSHNLPPMTT, and LKMTALAVTMLGFTLAFEITL.

This sequence belongs to the complex I subunit 5 family. In terms of assembly, core subunit of respiratory chain NADH dehydrogenase (Complex I) which is composed of 45 different subunits.

The protein localises to the mitochondrion inner membrane. The enzyme catalyses a ubiquinone + NADH + 5 H(+)(in) = a ubiquinol + NAD(+) + 4 H(+)(out). Core subunit of the mitochondrial membrane respiratory chain NADH dehydrogenase (Complex I) which catalyzes electron transfer from NADH through the respiratory chain, using ubiquinone as an electron acceptor. Essential for the catalytic activity and assembly of complex I. This Hippopotamus amphibius (Hippopotamus) protein is NADH-ubiquinone oxidoreductase chain 5 (MT-ND5).